Consider the following 480-residue polypeptide: Sestrin-2 (480 aa).

Met1 is modified (N-acetylmethionine). A disordered region spans residues 20–43 (RGGVAGPETREEHREGQARRGSRG). Basic and acidic residues predominate over residues 27–37 (ETREEHREGQA). An N-terminal domain; mediates the alkylhydroperoxide reductase activity region spans residues 66–239 (GLEALMSSGR…APSPPSEQGT (174 aa)). Residue Cys125 is the Cysteine sulfenic acid (-SOH) intermediate of the active site. Residue Lys175 forms a Glycyl lysine isopeptide (Lys-Gly) (interchain with G-Cter in ubiquitin) linkage. Disordered regions lie at residues 221 to 251 (DAEGSPASQAPSPPSEQGTPPSGDPLNNSGG) and 272 to 291 (LLRDEGASQEEMENRFELEK). Over residues 223–238 (EGSPASQAPSPPSEQG) the composition is skewed to low complexity. A Phosphoserine modification is found at Ser249. The interval 308–480 (PHPDILCFVE…ALRAITRYMT (173 aa)) is C-terminal domain; mediates TORC1 regulation. L-leucine-binding positions include 374-377 (TYNT), Thr386, and Glu451.

It belongs to the sestrin family. As to quaternary structure, interacts with the GATOR2 complex which is composed of MIOS, SEC13, SEH1L, WDR24 and WDR59; the interaction is negatively regulated by leucine. Conveys leucine availability via direct interaction with SEH1L and WDR24 components of the GATOR2 complex. Interacts with RRAGA, RRAGB, RRAGC and RRAGD; may function as a guanine nucleotide dissociation inhibitor for RRAGs and regulate them. May interact with the TORC2 complex. Interacts with KEAP1, RBX1, SQSTM and ULK1; to regulate the degradation of KEAP1. May also associate with the complex composed of TSC1, TSC2 and the AMP-responsive protein kinase/AMPK to regulate TORC1 signaling. May interact with PRDX1. In terms of processing, phosphorylated by ULK1 at multiple sites. Post-translationally, ubiquitinated at Lys-175 by RNF167 via 'Lys-63'-linked polyubiquitination in response to leucine deprivation: ubiquitination promotes SESN2-interaction with the GATOR2 complex, leading to inhibit the TORC1 signaling pathway. Deubiquitinated at Lys-175 by STAMBPL1, promoting the TORC1 signaling pathway. Ubiquitinated by RNF186; ubiquitination mediates proteasomal degradation. Detected in heart, liver and skeletal muscles (at protein level).

The protein resides in the cytoplasm. It carries out the reaction a hydroperoxide + L-cysteinyl-[protein] = S-hydroxy-L-cysteinyl-[protein] + an alcohol. Its function is as follows. Functions as an intracellular leucine sensor that negatively regulates the mTORC1 signaling pathway through the GATOR complex. In absence of leucine, binds the GATOR subcomplex GATOR2 and prevents mTORC1 signaling. Binding of leucine to SESN2 disrupts its interaction with GATOR2 thereby activating the TORC1 signaling pathway. This stress-inducible metabolic regulator also plays a role in protection against oxidative and genotoxic stresses. May negatively regulate protein translation in response to endoplasmic reticulum stress, via mTORC1. May positively regulate the transcription by NFE2L2 of genes involved in the response to oxidative stress by facilitating the SQSTM1-mediated autophagic degradation of KEAP1. May also mediate TP53 inhibition of TORC1 signaling upon genotoxic stress. Moreover, may prevent the accumulation of reactive oxygen species (ROS) through the alkylhydroperoxide reductase activity born by the N-terminal domain of the protein. Was originally reported to contribute to oxidative stress resistance by reducing PRDX1. However, this could not be confirmed. The chain is Sestrin-2 from Mus musculus (Mouse).